Here is a 577-residue protein sequence, read N- to C-terminus: Guanine nucleotide-binding protein-like 3-like protein (577 aa).

The span at 1–30 (MMKIRHKNKKPGKGSKGCKKPARQNGKKVT) shows a compositional bias: basic residues. Positions 1 to 75 (MMKIRHKNKK…VAREQERQRH (75 aa)) are disordered. A required for nucleolar localization region spans residues 9-28 (KKPGKGSKGCKKPARQNGKK). Residues 42 to 75 (GNDHASREAELKKKRVEEMREKQQVAREQERQRH) show a composition bias toward basic and acidic residues. Residues 43–103 (NDHASREAEL…QKEEVLQELN (61 aa)) adopt a coiled-coil conformation. The region spanning 118 to 304 (YKEFRKVVEY…LLDAPGIVPG (187 aa)) is the CP-type G domain. Residues 166–169 (NKID), 253–260 (GLPNVGKS), and 297–300 (DAPG) each bind GTP.

The protein belongs to the TRAFAC class YlqF/YawG GTPase family. As to quaternary structure, interacts with MDM2; this interaction, which occurs in the nucleoplasm, stabilizes MDM2. Indirectly interacts with TP53, via MDM2-binding. Interacts with TERF1; this interaction probably occurs in the nucleoplasm and is increased during mitosis, when the nucleolus is disassembled. This binding may promote TERF1 homodimerization. Interacts with TERT.

The protein resides in the nucleus. It localises to the nucleolus. Stabilizes TERF1 telomeric association by preventing TERF1 recruitment by PML. Stabilizes TERF1 protein by preventing its ubiquitination and hence proteasomal degradation. Does so by interfering with TERF1-binding to FBXO4 E3 ubiquitin-protein ligase. Required for cell proliferation. By stabilizing TRF1 protein during mitosis, promotes metaphase-to-anaphase transition. Stabilizes MDM2 protein by preventing its ubiquitination, and hence proteasomal degradation. By acting on MDM2, may affect TP53 activity. Required for normal processing of ribosomal pre-rRNA. Binds GTP. This Mus musculus (Mouse) protein is Guanine nucleotide-binding protein-like 3-like protein (Gnl3l).